The primary structure comprises 144 residues: 3-hydroxyacyl-[acyl-carrier-protein] dehydratase FabZ (144 aa).

Histidine 51 is a catalytic residue.

This sequence belongs to the thioester dehydratase family. FabZ subfamily.

The protein resides in the cytoplasm. The enzyme catalyses a (3R)-hydroxyacyl-[ACP] = a (2E)-enoyl-[ACP] + H2O. Functionally, involved in unsaturated fatty acids biosynthesis. Catalyzes the dehydration of short chain beta-hydroxyacyl-ACPs and long chain saturated and unsaturated beta-hydroxyacyl-ACPs. This Clostridium botulinum (strain Loch Maree / Type A3) protein is 3-hydroxyacyl-[acyl-carrier-protein] dehydratase FabZ.